We begin with the raw amino-acid sequence, 292 residues long: MSKKYPIISVVGSSGAGTSTVKNTFEQIFRREGVKSVSIEGDAFHRFNRADMKAELERRYAAGDATFSHFSYEANELKELERVFREYGETGRGRTRTYVHDDAEAARTGVAPGNFTQWAPFEDNSDLLFYEGLHGCVVNDEVNLVRHADLKLGVAPVINLEWIQKIHRDRAQRGYTTEAVTDVILRRMYAYVHCIVPQFSETDINFQRVPVVDTSNPFIARWIPTPDESLIVIRFKNPRGIDCPYLTSMIAGSWMSRANSIVVPGNKQDLAMQLILTPLIERMVREARRARA.

12 to 20 (GSSGAGTST) is an ATP binding site.

It belongs to the phosphoribulokinase family.

The enzyme catalyses D-ribulose 5-phosphate + ATP = D-ribulose 1,5-bisphosphate + ADP + H(+). The protein operates within carbohydrate biosynthesis; Calvin cycle. The sequence is that of Phosphoribulokinase 2 (prkB) from Cereibacter sphaeroides (Rhodobacter sphaeroides).